Consider the following 206-residue polypeptide: MGRTLVLIRHGQSEWNIKNLFTGWKDPGLTEKGHAEAITAGKNLKAAGLKFDIAYTSALQRAQKTAQHILEQMGQSDLPLIKNSALNERDYGDLSGLNKDEVRQQWGEQQVQIWRRSYAVAPPNGESLRDTGARVWPYYLYHIQPHILRSQTVLIAAHGNSLRALIMALEGLNSEEIISQELTTGIPLIYTFNSDSTISSKTIITP.

Residues Arg9–Asn16, Thr22–Gly23, Arg61, Glu88–Tyr91, Lys99, Arg115–Arg116, and Gly159–Asn160 contribute to the substrate site. The Tele-phosphohistidine intermediate role is filled by His10. The active-site Proton donor/acceptor is the Glu88.

Belongs to the phosphoglycerate mutase family. BPG-dependent PGAM subfamily. As to quaternary structure, homodimer.

The enzyme catalyses (2R)-2-phosphoglycerate = (2R)-3-phosphoglycerate. It participates in carbohydrate degradation; glycolysis; pyruvate from D-glyceraldehyde 3-phosphate: step 3/5. Its function is as follows. Catalyzes the interconversion of 2-phosphoglycerate and 3-phosphoglycerate. The sequence is that of 2,3-bisphosphoglycerate-dependent phosphoglycerate mutase from Bartonella quintana (strain Toulouse) (Rochalimaea quintana).